Here is a 347-residue protein sequence, read N- to C-terminus: MKQVQVAVVGASGYTGQELLRILLNHRGVKLVCATSRQYAGQPLWEVFPRFRQVPGSGLKFTDSDVEAIAATGAEVAFLALPHGVAASYARGLVDRGVRVIDLSADFRLDSPDVYEEYYGNPHPDTALMQEAVYGLPEWRREEIARARIVASPGCYPTSILLPLIPLFRAGMLEPEDVVACSGSGVSGAGRKASIPLLFCECNESFHAYGVPKHRHLSEIEQELSHAAGETVVMSFTPHLIPVNTGICSTITAKVKKGADPESVGRLLEEAYAAAPFVRLLGRNQPADTKNVTRTNCVDIGWAYDPRTNRVILMSAEDNVVKGAGGQAVQSFNIMCGFDETEGLWVL.

Residue cysteine 155 is part of the active site.

This sequence belongs to the NAGSA dehydrogenase family. Type 1 subfamily.

The protein localises to the cytoplasm. The enzyme catalyses N-acetyl-L-glutamate 5-semialdehyde + phosphate + NADP(+) = N-acetyl-L-glutamyl 5-phosphate + NADPH + H(+). It functions in the pathway amino-acid biosynthesis; L-arginine biosynthesis; N(2)-acetyl-L-ornithine from L-glutamate: step 3/4. Functionally, catalyzes the NADPH-dependent reduction of N-acetyl-5-glutamyl phosphate to yield N-acetyl-L-glutamate 5-semialdehyde. The sequence is that of N-acetyl-gamma-glutamyl-phosphate reductase from Akkermansia muciniphila (strain ATCC BAA-835 / DSM 22959 / JCM 33894 / BCRC 81048 / CCUG 64013 / CIP 107961 / Muc).